A 208-amino-acid polypeptide reads, in one-letter code: Guanylate kinase (208 aa).

The Guanylate kinase-like domain maps to 4 to 185 (GNLYILSAPS…ALADFQAILR (182 aa)). An ATP-binding site is contributed by 11 to 18 (APSGAGKS).

Belongs to the guanylate kinase family.

It is found in the cytoplasm. It carries out the reaction GMP + ATP = GDP + ADP. Its function is as follows. Essential for recycling GMP and indirectly, cGMP. In Pasteurella multocida (strain Pm70), this protein is Guanylate kinase (gmk).